Here is a 341-residue protein sequence, read N- to C-terminus: tRNA N6-adenosine threonylcarbamoyltransferase (341 aa).

The Fe cation site is built by His-115 and His-119. Substrate-binding positions include 137–141 (IVSGG), Asp-170, Gly-183, Asp-187, and Asn-276. Asp-304 lines the Fe cation pocket.

It belongs to the KAE1 / TsaD family. Fe(2+) is required as a cofactor.

The protein resides in the cytoplasm. It catalyses the reaction L-threonylcarbamoyladenylate + adenosine(37) in tRNA = N(6)-L-threonylcarbamoyladenosine(37) in tRNA + AMP + H(+). Its function is as follows. Required for the formation of a threonylcarbamoyl group on adenosine at position 37 (t(6)A37) in tRNAs that read codons beginning with adenine. Is involved in the transfer of the threonylcarbamoyl moiety of threonylcarbamoyl-AMP (TC-AMP) to the N6 group of A37, together with TsaE and TsaB. TsaD likely plays a direct catalytic role in this reaction. This chain is tRNA N6-adenosine threonylcarbamoyltransferase, found in Staphylococcus aureus (strain MSSA476).